The primary structure comprises 307 residues: Homoserine O-acetyltransferase (307 aa).

The Acyl-thioester intermediate role is filled by C142. K163 and S192 together coordinate substrate. H235 acts as the Proton acceptor in catalysis. E237 is a catalytic residue. Residue R249 participates in substrate binding.

Belongs to the MetA family.

Its subcellular location is the cytoplasm. The enzyme catalyses L-homoserine + acetyl-CoA = O-acetyl-L-homoserine + CoA. It functions in the pathway amino-acid biosynthesis; L-methionine biosynthesis via de novo pathway; O-acetyl-L-homoserine from L-homoserine: step 1/1. Its function is as follows. Transfers an acetyl group from acetyl-CoA to L-homoserine, forming acetyl-L-homoserine. The polypeptide is Homoserine O-acetyltransferase (Rhizobium johnstonii (strain DSM 114642 / LMG 32736 / 3841) (Rhizobium leguminosarum bv. viciae)).